We begin with the raw amino-acid sequence, 640 residues long: Probable potassium transport system protein Kup (640 aa).

Helical transmembrane passes span 26-46 (IAGLAVAAVGVVYGDIGTSPL), 69-89 (ILSLVFWALVLVVSAKYVLFI), 117-137 (AWVLSALGVFGAALFYGDGMI), 155-175 (PAFRPYVLPIALAVLCGLFVI), 186-206 (IFGPVMLVWFVLLAVLGIAGI), 224-244 (FFADMPLVGWLSLGAVVLAIT), 265-285 (WFLVVFPSLYLNYLGQGALIL), 297-317 (LLVPDALVYPMVAMATLATII), 355-375 (IYVPSINWMLLGAVVALVVGF), 384-404 (AYGIAVTLTMMIDTLLAFVVV), 415-435 (AGLFLGVFLAVDVAFFSATTV), and 437-457 (ILAGGWFPLLVGALIFTLLTT).

Belongs to the HAK/KUP transporter (TC 2.A.72) family.

The protein resides in the cell inner membrane. The catalysed reaction is K(+)(in) + H(+)(in) = K(+)(out) + H(+)(out). In terms of biological role, transport of potassium into the cell. Likely operates as a K(+):H(+) symporter. The sequence is that of Probable potassium transport system protein Kup from Aromatoleum aromaticum (strain DSM 19018 / LMG 30748 / EbN1) (Azoarcus sp. (strain EbN1)).